A 217-amino-acid chain; its full sequence is Protein-L-isoaspartate O-methyltransferase (217 aa).

Serine 64 is an active-site residue.

It belongs to the methyltransferase superfamily. L-isoaspartyl/D-aspartyl protein methyltransferase family.

Its subcellular location is the cytoplasm. It carries out the reaction [protein]-L-isoaspartate + S-adenosyl-L-methionine = [protein]-L-isoaspartate alpha-methyl ester + S-adenosyl-L-homocysteine. Catalyzes the methyl esterification of L-isoaspartyl residues in peptides and proteins that result from spontaneous decomposition of normal L-aspartyl and L-asparaginyl residues. It plays a role in the repair and/or degradation of damaged proteins. The sequence is that of Protein-L-isoaspartate O-methyltransferase from Nitrobacter winogradskyi (strain ATCC 25391 / DSM 10237 / CIP 104748 / NCIMB 11846 / Nb-255).